The chain runs to 138 residues: Large ribosomal subunit protein uL16c (138 aa).

Belongs to the universal ribosomal protein uL16 family. In terms of assembly, part of the 50S ribosomal subunit.

Its subcellular location is the plastid. It is found in the chloroplast. The protein is Large ribosomal subunit protein uL16c of Emiliania huxleyi (Coccolithophore).